The following is a 356-amino-acid chain: tRNA N6-adenosine threonylcarbamoyltransferase (356 aa).

Fe cation-binding residues include histidine 115 and histidine 119. Substrate is bound by residues 138–142 (LVSGG), aspartate 171, glycine 184, and asparagine 283. Aspartate 311 provides a ligand contact to Fe cation.

This sequence belongs to the KAE1 / TsaD family. The cofactor is Fe(2+).

It is found in the cytoplasm. It carries out the reaction L-threonylcarbamoyladenylate + adenosine(37) in tRNA = N(6)-L-threonylcarbamoyladenosine(37) in tRNA + AMP + H(+). In terms of biological role, required for the formation of a threonylcarbamoyl group on adenosine at position 37 (t(6)A37) in tRNAs that read codons beginning with adenine. Is involved in the transfer of the threonylcarbamoyl moiety of threonylcarbamoyl-AMP (TC-AMP) to the N6 group of A37, together with TsaE and TsaB. TsaD likely plays a direct catalytic role in this reaction. In Prochlorococcus marinus subsp. pastoris (strain CCMP1986 / NIES-2087 / MED4), this protein is tRNA N6-adenosine threonylcarbamoyltransferase.